Reading from the N-terminus, the 159-residue chain is Large ribosomal subunit protein mL50 (159 aa).

It belongs to the mitochondrion-specific ribosomal protein mL50 family. In terms of assembly, component of the mitochondrial ribosome large subunit (39S) which comprises a 16S rRNA and about 50 distinct proteins.

It is found in the mitochondrion. This Mus musculus (Mouse) protein is Large ribosomal subunit protein mL50 (Mrpl50).